The sequence spans 92 residues: Small ribosomal subunit protein uS19c (92 aa).

This sequence belongs to the universal ribosomal protein uS19 family.

The protein resides in the plastid. The protein localises to the chloroplast. Its function is as follows. Protein S19 forms a complex with S13 that binds strongly to the 16S ribosomal RNA. The chain is Small ribosomal subunit protein uS19c from Liriodendron tulipifera (Tuliptree).